Consider the following 163-residue polypeptide: Probable ribosome biogenesis protein RLP24 (163 aa).

Belongs to the eukaryotic ribosomal protein eL24 family. As to quaternary structure, associated with nucleolar and cytoplasmic pre-60S particles. At the end of biogenesis it dissociates from cytoplasmic pre-60S particles and is likely to be exchanged for its ribosomal homolog, RPL24.

It is found in the nucleus. The protein resides in the nucleolus. In terms of biological role, involved in the biogenesis of the 60S ribosomal subunit. Ensures the docking of GTPBP4/NOG1 to pre-60S particles. This Homo sapiens (Human) protein is Probable ribosome biogenesis protein RLP24 (RSL24D1).